Here is a 305-residue protein sequence, read N- to C-terminus: MAATLRELRGRIRSAGSIKKITKAQELIATSRIARAQARLESARPYAFEITRMLTTLAAEAALDHPLLVERPEPKRAGVLVVSSDRGLCGAYNANIFRRSEELFSLLREAGKQPVLYVVGRKAQNYYSFRNWNITESWMGFSEQPTYENAAEIASTLVDAFLLGTDNGEDQRSDSGEGVDELHIVYTEFKSMLSQSAEAHRIAPMVVEYVEEDIGPRTLYSFEPDATMLFESLLPRYLTTRVYAALLESAASELASRQRAMKSATDNADDLIKALTLMANRERQAQITQEISEIVGGANALAEAR.

It belongs to the ATPase gamma chain family. In terms of assembly, F-type ATPases have 2 components, CF(1) - the catalytic core - and CF(0) - the membrane proton channel. CF(1) has five subunits: alpha(3), beta(3), gamma(1), delta(1), epsilon(1). CF(0) has three main subunits: a, b and c.

It is found in the cell membrane. Produces ATP from ADP in the presence of a proton gradient across the membrane. The gamma chain is believed to be important in regulating ATPase activity and the flow of protons through the CF(0) complex. This Mycobacterium tuberculosis (strain ATCC 25177 / H37Ra) protein is ATP synthase gamma chain.